We begin with the raw amino-acid sequence, 432 residues long: 3-isopropylmalate dehydratase large subunit (432 aa).

C299, C364, and C367 together coordinate [4Fe-4S] cluster.

This sequence belongs to the aconitase/IPM isomerase family. LeuC type 2 subfamily. Heterodimer of LeuC and LeuD. [4Fe-4S] cluster is required as a cofactor.

It carries out the reaction (2R,3S)-3-isopropylmalate = (2S)-2-isopropylmalate. It functions in the pathway amino-acid biosynthesis; L-leucine biosynthesis; L-leucine from 3-methyl-2-oxobutanoate: step 2/4. In terms of biological role, catalyzes the isomerization between 2-isopropylmalate and 3-isopropylmalate, via the formation of 2-isopropylmaleate. The polypeptide is 3-isopropylmalate dehydratase large subunit (Aquifex aeolicus (strain VF5)).